The following is a 769-amino-acid chain: Gephyrin (769 aa).

An MPT Mo-transferase region spans residues 14-153; that stretch reads QIRVGVLTVS…LPGSKKGSQE (140 aa). Positions 140 to 349 are interaction with GABARAP; it reads LIINLPGSKK…VDITKVARRH (210 aa). 2 disordered regions span residues 181–232 and 260–299; these read DELE…DSSS and TASL…SKGV. The segment covering 187 to 199 has biased composition (pro residues); sequence PSPPPPLSPPPTT. Phosphoserine occurs at positions 188 and 194. Threonine 198 carries the phosphothreonine modification. Position 200 is a phosphoserine (serine 200). Cysteine 212 is lipidated: S-palmitoyl cysteine. Over residues 261 to 286 the composition is skewed to polar residues; that stretch reads ASLSTTPSESPRAQATSRLSTASCPT. Serine 262 bears the Phosphoserine mark. Residues threonine 265 and threonine 266 each carry the phosphothreonine modification. Phosphoserine occurs at positions 268 and 270. A lipid anchor (S-palmitoyl cysteine) is attached at cysteine 284. The MPT adenylyltransferase stretch occupies residues 327 to 769; sequence SSKENILRAS…VVDVMVIGRL (443 aa). Position 338 is a phosphoserine (serine 338).

This sequence in the N-terminal section; belongs to the MoaB/Mog family. In the C-terminal section; belongs to the MoeA family. As to quaternary structure, homotrimer, homodimer and homooligomer. Interacts with SRGAP2 (via SH3 domain). Interacts with GLRB. Interacts with GABARAP. Interacts with GABRA3. GABRA3 and GLRB occupy overlapping binding sites. Interacts with ARHGAP32; IQSEC3, INSYN1 and INSYN2A. Mg(2+) serves as cofactor. Palmitoylated. Palmitoylation is stimulated by GABA type A receptors activity. Palmitoylation by ZDHHC12 regulates clustering at synapses.

The protein resides in the postsynaptic cell membrane. Its subcellular location is the cell membrane. It localises to the cytoplasm. The protein localises to the cytosol. It is found in the cytoskeleton. The protein resides in the cell projection. Its subcellular location is the dendrite. It localises to the postsynaptic density. It carries out the reaction molybdopterin + ATP + H(+) = adenylyl-molybdopterin + diphosphate. The enzyme catalyses adenylyl-molybdopterin + molybdate = Mo-molybdopterin + AMP + H(+). It participates in cofactor biosynthesis; molybdopterin biosynthesis. Its activity is regulated as follows. Inhibited by copper and tungsten. Functionally, microtubule-associated protein involved in membrane protein-cytoskeleton interactions. It is thought to anchor the inhibitory glycine receptor (GLYR) to subsynaptic microtubules. Acts as a major instructive molecule at inhibitory synapses, where it also clusters GABA type A receptors. In terms of biological role, also has a catalytic activity and catalyzes two steps in the biosynthesis of the molybdenum cofactor. In the first step, molybdopterin is adenylated. Subsequently, molybdate is inserted into adenylated molybdopterin and AMP is released. The polypeptide is Gephyrin (Gphn) (Mus musculus (Mouse)).